Consider the following 201-residue polypeptide: Proteasome subunit beta type-2 (201 aa).

N-acetylmethionine is present on Met-1.

Belongs to the peptidase T1B family. As to quaternary structure, the 26S proteasome consists of a 20S proteasome core and two 19S regulatory subunits. The 20S proteasome core is a barrel-shaped complex made of 28 subunits that are arranged in four stacked rings. The two outer rings are each formed by seven alpha subunits, and the two inner rings are formed by seven beta subunits. The proteolytic activity is exerted by three beta-subunits PSMB5, PSMB6 and PSMB7. In terms of assembly, (Microbial infection) Interacts with HIV-1 protein Tat.

The protein localises to the cytoplasm. Its subcellular location is the nucleus. Its function is as follows. Non-catalytic component of the 20S core proteasome complex involved in the proteolytic degradation of most intracellular proteins. This complex plays numerous essential roles within the cell by associating with different regulatory particles. Associated with two 19S regulatory particles, forms the 26S proteasome and thus participates in the ATP-dependent degradation of ubiquitinated proteins. The 26S proteasome plays a key role in the maintenance of protein homeostasis by removing misfolded or damaged proteins that could impair cellular functions, and by removing proteins whose functions are no longer required. Associated with the PA200 or PA28, the 20S proteasome mediates ubiquitin-independent protein degradation. This type of proteolysis is required in several pathways including spermatogenesis (20S-PA200 complex) or generation of a subset of MHC class I-presented antigenic peptides (20S-PA28 complex). This is Proteasome subunit beta type-2 from Homo sapiens (Human).